A 167-amino-acid chain; its full sequence is Large ribosomal subunit protein uL10 (167 aa).

Belongs to the universal ribosomal protein uL10 family. Part of the ribosomal stalk of the 50S ribosomal subunit. The N-terminus interacts with L11 and the large rRNA to form the base of the stalk. The C-terminus forms an elongated spine to which L12 dimers bind in a sequential fashion forming a multimeric L10(L12)X complex.

In terms of biological role, forms part of the ribosomal stalk, playing a central role in the interaction of the ribosome with GTP-bound translation factors. This Alkaliphilus oremlandii (strain OhILAs) (Clostridium oremlandii (strain OhILAs)) protein is Large ribosomal subunit protein uL10.